We begin with the raw amino-acid sequence, 216 residues long: Heart- and neural crest derivatives-expressed protein 2 (216 aa).

A disordered region spans residues 74 to 115 (MDHSHYGGVPPGSGPPGLGGPRPVKRRGTANRKERRRTQSIN). The segment covering 82–93 (VPPGSGPPGLGG) has biased composition (gly residues). A compositionally biased stretch (basic residues) spans 96–111 (PVKRRGTANRKERRRT). A bHLH domain is found at 98–150 (KRRGTANRKERRRTQSINSAFAELRECIPNVPADTKLSKIKTLRLATSYIAYL).

As to quaternary structure, efficient DNA binding requires dimerization with another bHLH protein.

The protein resides in the nucleus. Its function is as follows. Essential for cardiac morphogenesis. Binds DNA on E-box consensus sequence 5'-CANNTG-3'. Plays an important role in limb development, particularly in the establishment of anterior-posterior polarization of the limb bud. The polypeptide is Heart- and neural crest derivatives-expressed protein 2 (HAND2) (Gallus gallus (Chicken)).